Consider the following 300-residue polypeptide: Acetylglutamate kinase (300 aa).

Substrate is bound by residues 73 to 74, R95, and N197; that span reads GG.

Belongs to the acetylglutamate kinase family. ArgB subfamily.

It localises to the cytoplasm. The enzyme catalyses N-acetyl-L-glutamate + ATP = N-acetyl-L-glutamyl 5-phosphate + ADP. The protein operates within amino-acid biosynthesis; L-arginine biosynthesis; N(2)-acetyl-L-ornithine from L-glutamate: step 2/4. In terms of biological role, catalyzes the ATP-dependent phosphorylation of N-acetyl-L-glutamate. This is Acetylglutamate kinase from Polynucleobacter asymbioticus (strain DSM 18221 / CIP 109841 / QLW-P1DMWA-1) (Polynucleobacter necessarius subsp. asymbioticus).